The following is a 685-amino-acid chain: UvrABC system protein B (685 aa).

The Helicase ATP-binding domain maps to 39–420; it reads EGIGDGLMYQ…TYEAEHQGQV (382 aa). 52–59 is a binding site for ATP; the sequence is GVTGSGKT. Positions 105–128 match the Beta-hairpin motif; the sequence is YYDYYQPEAYVPSRDLFIEKDSSI. A Helicase C-terminal domain is found at 443 to 596; the sequence is QVDDLLSEAK…QIAFNQANGI (154 aa). The UVR domain maps to 640 to 675; the sequence is AKSIRKLEKEMQEHARNLEFEKAAAARDELFRLRQR.

This sequence belongs to the UvrB family. In terms of assembly, forms a heterotetramer with UvrA during the search for lesions. Interacts with UvrC in an incision complex.

The protein resides in the cytoplasm. In terms of biological role, the UvrABC repair system catalyzes the recognition and processing of DNA lesions. A damage recognition complex composed of 2 UvrA and 2 UvrB subunits scans DNA for abnormalities. Upon binding of the UvrA(2)B(2) complex to a putative damaged site, the DNA wraps around one UvrB monomer. DNA wrap is dependent on ATP binding by UvrB and probably causes local melting of the DNA helix, facilitating insertion of UvrB beta-hairpin between the DNA strands. Then UvrB probes one DNA strand for the presence of a lesion. If a lesion is found the UvrA subunits dissociate and the UvrB-DNA preincision complex is formed. This complex is subsequently bound by UvrC and the second UvrB is released. If no lesion is found, the DNA wraps around the other UvrB subunit that will check the other stand for damage. The protein is UvrABC system protein B of Aromatoleum aromaticum (strain DSM 19018 / LMG 30748 / EbN1) (Azoarcus sp. (strain EbN1)).